The chain runs to 1273 residues: Cullin-associated NEDD8-dissociated protein 2 (1273 aa).

S2 is subject to N-acetylserine. 26 HEAT repeats span residues 2–36 (STGAFYISSLLEKMTSSDKDFSPKSLGGSRVLDPL), 37–74 (PWLQILAAITDWISGDRTQDLALPRFMATSDLMSELQK), 82–119 (DSERKVVRTLLRLLEDRSGEVQNLAVKCLGPLVGKVKE), 121–157 (QVENIVDTLCANMRSDKEQLRDIAGIGLKTVLSELPP), 167–205 (SVCRKITGQLTSAIAQQEDVAVQLEALDILSDMLSRLGA), 209–246 (TFHASLLHCLLPQLSSPRLAVRKRTVVALGHLAAACST), 248–284 (LFVELADHLVDRLPGPRAPASPAAIRTLIQCLGSVGR), 292–329 (AHLDRLMPLVEEFCNLDDDELRESCLQAFEAFLRKCPK), 364–405 (TEDS…SRPD), 409–446 (DFHCTLAPALIRCFKEREENVKADIFGAYIMLLRHTRP), 469–506 (AQVPLVMKALQRQLKDRNVRTRQGCFNLFTELAGVLPG), 554–591 (PHLPTLLPPVMACVADPFYKVAAEALLVLQELVRTLWP), 602–641 (PYVGEMSTATLARLRATDLDQEVKERAISCVGHLVGHLGD), 685–722 (PILAEALPILASFLRKNQRALRLATLAALDALAQSQGL), 727–764 (PAVRSVLAELPALVSENDMHVAQLAVDFLTTVTQTQPA), 768–807 (EVSGPVLEELLQLLHSPLLPAGVLAATEGFLQALVGTRPP), 809–850 (VEYS…ALSA), 894–931 (GPQRELKTVLLEALGSPSEDVRAAAAYALGRVGAGNLP), 933–968 (FLPFLLAQIEAQPRRQYLLLHALREALGAAQPDNLK), 970–1003 (YVEDVWALLFQRCESPEEGTRCVVAECIGKLVFV), 1004–1040 (NPPFLLPRFRKQLAAGQPYTRSTVITAVKFLISDQPH), 1044–1081 (PLLKSFIAEFMESLQDPDLNVRRATLTFFNSAVHNKPS), 1085–1121 (DLLDDILPLLYQETKIRRDLIREVEMGPFKHTVDDGL), 1142–1178 (LDICEFLNHVEDGLKDHYDIRMLTFIMLARLAALCPA), 1194–1231 (TCTAKVKAGSVKQELEKQDELKRSAMRAVAALMTNPEV), and 1241–1273 (STQIRSNPELATLFESIQKDTASGPSMDSMELS). Residues 352 to 383 (YNHDSDEEEQMETEDSEFSEQESEDEYSDDDD) form a disordered region. A compositionally biased stretch (acidic residues) spans 356 to 383 (SDEEEQMETEDSEFSEQESEDEYSDDDD).

This sequence belongs to the CAND family. Binds TBP, CNOT3 and UBE3C. Ubiquitinated and targeted for proteasomal degradation. Detected in heart and skeletal muscle.

Its subcellular location is the nucleus. In terms of biological role, probable assembly factor of SCF (SKP1-CUL1-F-box protein) E3 ubiquitin ligase complexes that promotes the exchange of the substrate-recognition F-box subunit in SCF complexes, thereby playing a key role in the cellular repertoire of SCF complexes. In Rattus norvegicus (Rat), this protein is Cullin-associated NEDD8-dissociated protein 2 (Cand2).